Reading from the N-terminus, the 805-residue chain is N-(5-amino-5-carboxypentanoyl)-L-cysteinyl-D-valine synthase (805 aa).

The disordered stretch occupies residues 783-805; it reads PDTGGGAVGSTTTGGVRGELREI.

It belongs to the ATP-dependent AMP-binding enzyme family. Pantetheine 4'-phosphate is required as a cofactor.

The catalysed reaction is L-2-aminoadipate + L-valine + L-cysteine + 3 ATP + H2O = N-[(5S)-5-amino-5-carboxypentanoyl]-L-cysteinyl-D-valine + 3 AMP + 3 diphosphate + 3 H(+). It participates in antibiotic biosynthesis; penicillin G biosynthesis; penicillin G from L-alpha-aminoadipate and L-cysteine and L-valine: step 1/3. Functionally, each of the constituent amino acids of ACV are activated as aminoacyl-adenylates with peptide bonds formed through the participation of amino acid thioester intermediates. The polypeptide is N-(5-amino-5-carboxypentanoyl)-L-cysteinyl-D-valine synthase (pcbAB) (Streptomyces clavuligerus).